The sequence spans 486 residues: UDP-N-acetylmuramoyl-L-alanyl-D-glutamate--2,6-diaminopimelate ligase (486 aa).

Ser31 contacts UDP-N-acetyl-alpha-D-muramoyl-L-alanyl-D-glutamate. 109-115 (GTNGKTT) provides a ligand contact to ATP. Residues Asn150, 151–152 (TT), Ser178, and Arg186 contribute to the UDP-N-acetyl-alpha-D-muramoyl-L-alanyl-D-glutamate site. Position 218 is an N6-carboxylysine (Lys218). Residues Arg381, 405–408 (DNPR), Gly455, and Glu459 contribute to the meso-2,6-diaminopimelate site. The Meso-diaminopimelate recognition motif motif lies at 405–408 (DNPR).

Belongs to the MurCDEF family. MurE subfamily. Mg(2+) serves as cofactor. Carboxylation is probably crucial for Mg(2+) binding and, consequently, for the gamma-phosphate positioning of ATP.

The protein localises to the cytoplasm. The enzyme catalyses UDP-N-acetyl-alpha-D-muramoyl-L-alanyl-D-glutamate + meso-2,6-diaminopimelate + ATP = UDP-N-acetyl-alpha-D-muramoyl-L-alanyl-gamma-D-glutamyl-meso-2,6-diaminopimelate + ADP + phosphate + H(+). It participates in cell wall biogenesis; peptidoglycan biosynthesis. Functionally, catalyzes the addition of meso-diaminopimelic acid to the nucleotide precursor UDP-N-acetylmuramoyl-L-alanyl-D-glutamate (UMAG) in the biosynthesis of bacterial cell-wall peptidoglycan. In Halalkalibacterium halodurans (strain ATCC BAA-125 / DSM 18197 / FERM 7344 / JCM 9153 / C-125) (Bacillus halodurans), this protein is UDP-N-acetylmuramoyl-L-alanyl-D-glutamate--2,6-diaminopimelate ligase.